The primary structure comprises 219 residues: Probable GTP-binding protein EngB (219 aa).

Positions 24–207 constitute an EngB-type G domain; sequence VQPEIAFAGR…HELIESWLRP (184 aa). Residues 32–39, 59–63, 81–84, 148–151, and 186–188 contribute to the GTP site; these read GRSNAGKS, GRTQH, DLPG, TKCD, and FSA. The Mg(2+) site is built by Ser-39 and Thr-61.

This sequence belongs to the TRAFAC class TrmE-Era-EngA-EngB-Septin-like GTPase superfamily. EngB GTPase family. It depends on Mg(2+) as a cofactor.

In terms of biological role, necessary for normal cell division and for the maintenance of normal septation. The sequence is that of Probable GTP-binding protein EngB from Burkholderia cenocepacia (strain HI2424).